Reading from the N-terminus, the 392-residue chain is Histidinol-phosphate aminotransferase (392 aa).

Residues 1-24 (MSAVLKDPIPAPGRPESTRPEPRP) are disordered. Residue Lys236 is modified to N6-(pyridoxal phosphate)lysine.

This sequence belongs to the class-II pyridoxal-phosphate-dependent aminotransferase family. Histidinol-phosphate aminotransferase subfamily. Homodimer. Pyridoxal 5'-phosphate is required as a cofactor.

The catalysed reaction is L-histidinol phosphate + 2-oxoglutarate = 3-(imidazol-4-yl)-2-oxopropyl phosphate + L-glutamate. The protein operates within amino-acid biosynthesis; L-histidine biosynthesis; L-histidine from 5-phospho-alpha-D-ribose 1-diphosphate: step 7/9. The sequence is that of Histidinol-phosphate aminotransferase from Xanthobacter autotrophicus (strain ATCC BAA-1158 / Py2).